Reading from the N-terminus, the 358-residue chain is Malate dehydrogenase 2, glyoxysomal (358 aa).

The transit peptide at 1–38 (MEFRGDANKRIAMISAHLQPSFTPQMEAKNSVMGRENC) directs the protein to the glyoxysome. NAD(+) contacts are provided by residues 53–59 (GAAGGIG) and Asp79. Arg126 and Arg132 together coordinate substrate. NAD(+)-binding positions include Asn139 and 162–164 (ISN). The substrate site is built by Asn164 and Arg198. Residue His222 is the Proton acceptor of the active site. Met273 lines the NAD(+) pocket.

The protein belongs to the LDH/MDH superfamily. MDH type 1 family. As to quaternary structure, homodimer.

The protein resides in the glyoxysome. It catalyses the reaction (S)-malate + NAD(+) = oxaloacetate + NADH + H(+). In Brassica napus (Rape), this protein is Malate dehydrogenase 2, glyoxysomal (MDH2).